The chain runs to 128 residues: Protein Wnt-8 (128 aa).

A lipid anchor (O-palmitoleoyl serine) is attached at S1. 2 cysteine pairs are disulfide-bonded: C69-C109 and C85-C102. N-linked (GlcNAc...) asparagine glycosylation occurs at N72.

The protein belongs to the Wnt family. Palmitoleoylation is required for efficient binding to frizzled receptors. Depalmitoleoylation leads to Wnt signaling pathway inhibition. Post-translationally, proteolytic processing by tiki1 and tiki2 promotes oxidation and formation of large disulfide-bond oligomers, leading to inactivation of wnt8.

The protein resides in the secreted. It is found in the extracellular space. The protein localises to the extracellular matrix. Its function is as follows. Ligand for members of the frizzled family of seven transmembrane receptors. Probable developmental protein. May be a signaling molecule which affects the development of discrete regions of tissues. Is likely to signal over only few cell diameters. This chain is Protein Wnt-8 (WNT-8), found in Evasterias troschelii (Mottled sea star).